An 89-amino-acid polypeptide reads, in one-letter code: Small ribosomal subunit protein uS15 (89 aa).

The protein belongs to the universal ribosomal protein uS15 family. Part of the 30S ribosomal subunit. Forms a bridge to the 50S subunit in the 70S ribosome, contacting the 23S rRNA.

Its function is as follows. One of the primary rRNA binding proteins, it binds directly to 16S rRNA where it helps nucleate assembly of the platform of the 30S subunit by binding and bridging several RNA helices of the 16S rRNA. In terms of biological role, forms an intersubunit bridge (bridge B4) with the 23S rRNA of the 50S subunit in the ribosome. The protein is Small ribosomal subunit protein uS15 of Haemophilus influenzae (strain 86-028NP).